The primary structure comprises 279 residues: Syntaxin-21 (279 aa).

The segment at 1 to 34 (MSFQDLEAGTRSPAPNRFTGGRQQRPSSRGDPSQ) is disordered. Serine 2 carries the N-acetylserine modification. At 2–258 (SFQDLEAGTR…AKTQRSNSSL (257 aa)) the chain is on the cytoplasmic side. Over residues 21 to 31 (GRQQRPSSRGD) the composition is skewed to polar residues. Positions 65–94 (ELRDKLQKTRLQISELVKNTSAKLKEASEA) form a coiled coil. The t-SNARE coiled-coil homology domain occupies 186 to 248 (EAIIEEREQG…TQATVQLRKA (63 aa)). A helical; Anchor for type IV membrane protein membrane pass occupies residues 259–279 (TCLLILIFGIVLLIVIIVVLV).

The protein belongs to the syntaxin family. In terms of assembly, interacts with VTI11 and SYP51 to form a t-SNARE complex and with alpha-SNAP to form a 20S complex. A high level expression is seen in the roots while a low level expression is seen in the leaves.

It localises to the prevacuolar compartment membrane. In terms of biological role, may function in the docking or fusion of transport vesicles with the prevacuolar membrane. The polypeptide is Syntaxin-21 (SYP21) (Arabidopsis thaliana (Mouse-ear cress)).